The primary structure comprises 372 residues: Lectin/endochitinase 1 (372 aa).

An N-terminal signal peptide occupies residues 1 to 23 (MMMRFLSAVVIMSSAMAVGLVSA). Position 24 (Q24) interacts with substrate. Q24 carries the pyrrolidone carboxylic acid modification. 2 consecutive Chitin-binding type-1 domains span residues 24–64 (QRCG…KCWS) and 69–111 (DHRC…RCSS). 4 disulfides stabilise this stretch: C26–C41, C35–C47, C40–C54, and C58–C62. 42–53 (SIWGWCGDSEPY) contributes to the substrate binding site. Residue H70 coordinates Zn(2+). 4 disulfides stabilise this stretch: C72–C87, C81–C93, C86–C100, and C105–C109. H90 contacts Zn(2+). Positions 113–128 (VRGPRVALSGNSTANS) are spacer. N-linked (GlcNAc...) asparagine glycosylation is present at N123. Residues 129-372 (IGNVVVTEPL…FQRIQMRVAA (244 aa)) form a chitinase region.

In terms of assembly, monomer and homodimer. Zinc favors dimerization. Active in the monomeric form but probably inactive in the dimeric form. The interaction with glycans on the mammalian TCR and MHC molecules of the T-cell and antigen-presenting cell, respectively, is inhibited by oligomers of GlcNAc. In terms of processing, proteolytically processed to yield a very small protein (8.5 kDa, 86 AA) containing only the two chitin-binding domains. Rhizomes and inflorescence with immature seeds.

The catalysed reaction is Random endo-hydrolysis of N-acetyl-beta-D-glucosaminide (1-&gt;4)-beta-linkages in chitin and chitodextrins.. Functions both as a chitinase and as a N-acetyl-D-glucosamine binding lectin. Inhibits the growth of several phytopathogenic chitin-containing fungi. Also possesses insecticidal activity and superantigenic properties. This is Lectin/endochitinase 1 (UDA1) from Urtica dioica (Great nettle).